The primary structure comprises 449 residues: MISGPFLHFDPTVPLQTVMIGHPATSPLSLPSSSSSPTVADPSNIHCRVCERRYDGSQHFGIDICRACAAFFRRSVAVKKTFVCRRGTNKCELNTVSRKTTCQKCRWMRCLLVGLNVDAVVGRRSPDHVKTTSRDESVKKEDEESDTGSEGKSCEDMDVSHPIEQFQQQISFSVHRPIPTIGNPNIYTTRASLINKVLINYNEFTKSRLDVELSLKHMQQDSKVFGSTGIPIVPATREIISEIYQKQFGLLHIFLKNTFDEYAECDVQEQKRICAMFYPVLWEIESCYWTYRNMPVQPEYETLMMCTQTTYIDSKNVRYWLGNTTGLNESDIQAVEARLENLLTKARNLVLEPMHKLIIKEFEFITLLALNIWAPRNHRGCVSEDRAEQVRDALFDDLHYLYCDGLKIDKYSSRMGEMMCLHTEVQNADMSSTIKNILFSDLNAYLYSI.

The nuclear receptor DNA-binding region spans 44-122 (NIHCRVCERR…VGLNVDAVVG (79 aa)). 2 consecutive NR C4-type zinc fingers follow at residues 47–68 (CRVC…CRAC) and 84–105 (CRRG…CQKC). The span at 125-142 (SPDHVKTTSRDESVKKED) shows a compositional bias: basic and acidic residues. The disordered stretch occupies residues 125–154 (SPDHVKTTSRDESVKKEDEESDTGSEGKSC). Positions 200–449 (NYNEFTKSRL…SDLNAYLYSI (250 aa)) constitute an NR LBD domain.

Its subcellular location is the nucleus. In terms of biological role, ligand-activated transcription factor. Positively modulates expression of homeobox protein lin-39, perhaps by binding to the sequence motif 5'-TGAC-3' in regulatory regions of the lin-39 gene, acting in the embryo, and also in the vulval lineage. The protein is Nuclear hormone receptor family member nhr-43 of Caenorhabditis elegans.